A 288-amino-acid polypeptide reads, in one-letter code: Formamidopyrimidine-DNA glycosylase (288 aa).

Pro-2 (schiff-base intermediate with DNA) is an active-site residue. Catalysis depends on Glu-3, which acts as the Proton donor. Lys-58 (proton donor; for beta-elimination activity) is an active-site residue. DNA is bound by residues His-99, Arg-118, and Lys-161. Residues 252-288 (RVYDREAEPCPREGCGGTIKRIVQAGRSTFFCAKCQR) form an FPG-type zinc finger. Arg-278 serves as the catalytic Proton donor; for delta-elimination activity.

This sequence belongs to the FPG family. In terms of assembly, monomer. Zn(2+) serves as cofactor.

It catalyses the reaction Hydrolysis of DNA containing ring-opened 7-methylguanine residues, releasing 2,6-diamino-4-hydroxy-5-(N-methyl)formamidopyrimidine.. It carries out the reaction 2'-deoxyribonucleotide-(2'-deoxyribose 5'-phosphate)-2'-deoxyribonucleotide-DNA = a 3'-end 2'-deoxyribonucleotide-(2,3-dehydro-2,3-deoxyribose 5'-phosphate)-DNA + a 5'-end 5'-phospho-2'-deoxyribonucleoside-DNA + H(+). Involved in base excision repair of DNA damaged by oxidation or by mutagenic agents. Acts as a DNA glycosylase that recognizes and removes damaged bases. Has a preference for oxidized purines, such as 7,8-dihydro-8-oxoguanine (8-oxoG). Has AP (apurinic/apyrimidinic) lyase activity and introduces nicks in the DNA strand. Cleaves the DNA backbone by beta-delta elimination to generate a single-strand break at the site of the removed base with both 3'- and 5'-phosphates. The sequence is that of Formamidopyrimidine-DNA glycosylase from Beijerinckia indica subsp. indica (strain ATCC 9039 / DSM 1715 / NCIMB 8712).